The following is a 600-amino-acid chain: Myelin expression factor 2 (600 aa).

The tract at residues methionine 1 to arginine 101 is disordered. A Phosphothreonine modification is found at threonine 13. A Phosphoserine modification is found at serine 17. Residues glycine 27 to glutamine 42 show a composition bias toward basic and acidic residues. Residue lysine 53 forms a Glycyl lysine isopeptide (Lys-Gly) (interchain with G-Cter in SUMO2) linkage. 2 stretches are compositionally biased toward basic and acidic residues: residues methionine 54–threonine 72 and tyrosine 83–glycine 96. 2 RRM domains span residues asparagine 100–aspartate 178 and serine 233–lysine 310. Omega-N-methylarginine is present on arginine 406. Residue serine 431 is modified to Phosphoserine. Positions asparagine 523–asparagine 599 constitute an RRM 3 domain.

Monomer.

It is found in the nucleus. Its function is as follows. Transcriptional repressor of the myelin basic protein gene (MBP). Binds to the proximal MB1 element 5'-TTGTCC-3' of the MBP promoter. Its binding to MB1 and function are inhibited by PURA. In Homo sapiens (Human), this protein is Myelin expression factor 2 (MYEF2).